The sequence spans 530 residues: Chaperone Ric-8A (530 aa).

Ser-435 carries the post-translational modification Phosphoserine. 2 positions are modified to phosphothreonine: Thr-440 and Thr-442. A phosphoserine mark is found at Ser-501, Ser-522, Ser-523, and Ser-527.

The protein belongs to the synembryn family. As to quaternary structure, interacts with GDP-bound G alpha proteins GNAI1, GNAO1 and GNAQ, and with GNA13 with lower affinity. Does not interact with G-alpha proteins when they are in complex with subunits beta and gamma. Interacts (via C-terminus) with RGS14; the interaction stimulates the dissociation of the complex between RGS14 and the active GTP-bound form of GNAI1. Interacts with NCS1; interaction is favored in the absence of Ca(2+) and myristoylation of NCS1 is not required. Expressed in neurons and neurites of the CA1 and CA2 subregions of the hippocampus (at protein level). In adult brain, it is expressed in the neocortex, hippocampus and cerebellum as well as in the pineal gland and ependymal layer.

It is found in the cytoplasm. The protein resides in the cell cortex. Functionally, chaperone that specifically binds and folds nascent G alpha proteins prior to G protein heterotrimer formation, promoting their stability and activity: folds GNAI1, GNAO1, GNA13 and GNAQ. Does not fold G(s) G-alpha proteins GNAS nor GNAL. Also acts as a guanine nucleotide exchange factor (GEF) for G alpha proteins by stimulating exchange of bound GDP for free GTP. Involved in regulation of microtubule pulling forces during mitotic movement of chromosomes by stimulating G(i)-alpha protein (GNAI1), possibly leading to release G(i)-alpha-GTP and NuMA proteins from the NuMA-GPSM2-G(i)-alpha-GDP complex. Also acts as an activator for G(q)-alpha (GNAQ) protein by enhancing the G(q)-coupled receptor-mediated ERK activation. This chain is Chaperone Ric-8A, found in Mus musculus (Mouse).